Consider the following 479-residue polypeptide: MASTIKEALSVVSEDQSLFECAYGTPHLAKTEMTASSSSDYGQTSKMSPRVPQQDWLSQPPARVTIKMECNPSQVNGSRNSPDECSVAKGGKMVGSPDTVGMNYGSYMEEKHMPPPNMTTNERRVIVPADPTLWSTDHVRQWLEWAVKEYGLPDVNILLFQNIDGKELCKMTKDDFQRLTPSYNADILLSHLHYLRETPLPHLTSDDVDKALQNSPRLMHARNTGGAAFIFPNTSVYPEATQRITTRPDLPYEPPRRSAWTGHGHPTPQSKAAQPSPSTVPKTEDQRPQLDPYQILGPTSSRLANPGSGQIQLWQFLLELLSDSSNSSCITWEGTNGEFKMTDPDEVARRWGERKSKPNMNYDKLSRALRYYYDKNIMTKVHGKRYAYKFDFHGIAQALQPHPPESSLYKYPSDLPYMGSYHAHPQKMNFVAPHPPALPVTSSSFFAAPNPYWNSPTGGIYPNTRLPTSHMPSHLGTYY.

Positions 34-47 (TASSSSDYGQTSKM) are enriched in polar residues. Disordered regions lie at residues 34-56 (TASS…QQDW) and 72-92 (PSQV…KGGK). 3 positions are modified to phosphoserine: Ser48, Ser81, and Ser96. One can recognise a PNT domain in the interval 113–199 (MPPPNMTTNE…SHLHYLRETP (87 aa)). Positions 242-293 (QRITTRPDLPYEPPRRSAWTGHGHPTPQSKAAQPSPSTVPKTEDQRPQLDPY) are disordered. A compositionally biased stretch (polar residues) spans 267–281 (TPQSKAAQPSPSTVP). Residue Lys282 forms a Glycyl lysine isopeptide (Lys-Gly) (interchain with G-Cter in SUMO2) linkage. The segment at residues 311–391 (IQLWQFLLEL…HGKRYAYKFD (81 aa)) is a DNA-binding region (ETS).

It belongs to the ETS family. In terms of assembly, identified in a IGF2BP1-dependent mRNP granule complex containing untranslated mRNAs. Interacts with SETDB1.

The protein resides in the nucleus. It localises to the cytoplasm. Transcriptional regulator. May participate in transcriptional regulation through the recruitment of SETDB1 histone methyltransferase and subsequent modification of local chromatin structure. The polypeptide is Transcriptional regulator ERG (ERG) (Homo sapiens (Human)).